The primary structure comprises 265 residues: tRNA (guanine-N(7)-)-methyltransferase (265 aa).

A compositionally biased stretch (basic and acidic residues) spans 1 to 16; sequence MNHDDPNASGVPHDDA. The segment at 1–40 is disordered; sequence MNHDDPNASGVPHDDANDAAPASASDAARATGHADDESSP. Residues 18–31 show a composition bias toward low complexity; that stretch reads DAAPASASDAARAT. The S-adenosyl-L-methionine site is built by E95, E120, D147, and D170. Residue D170 is part of the active site. Substrate contacts are provided by residues K174, D206, and 241–244; that span reads TKFE.

Belongs to the class I-like SAM-binding methyltransferase superfamily. TrmB family.

The enzyme catalyses guanosine(46) in tRNA + S-adenosyl-L-methionine = N(7)-methylguanosine(46) in tRNA + S-adenosyl-L-homocysteine. It participates in tRNA modification; N(7)-methylguanine-tRNA biosynthesis. Its function is as follows. Catalyzes the formation of N(7)-methylguanine at position 46 (m7G46) in tRNA. In Burkholderia thailandensis (strain ATCC 700388 / DSM 13276 / CCUG 48851 / CIP 106301 / E264), this protein is tRNA (guanine-N(7)-)-methyltransferase.